A 129-amino-acid chain; its full sequence is M-zodatoxin-Lt8h (129 aa).

Residues 1-20 form the signal peptide; it reads MKYFVVALALVAAFACIAES. A propeptide spanning residues 21-60 is cleaved from the precursor; it reads KPAESEHELAEVEEENELADLEDAVWLEDLADLSDLEETR.

It belongs to the cationic peptide 06 (cytoinsectotoxin) family. In terms of tissue distribution, expressed by the venom gland.

Its subcellular location is the secreted. Insecticidal, cytolytic and antimicrobial peptide. Has insecticidal activity against the flesh fly S.carnaria. Has antibacterial activity against the Gram-negative bacteria E.coli. Forms voltage-dependent, ion-permeable channels in membranes. At high concentration causes cell membrane lysis. The chain is M-zodatoxin-Lt8h (cit 1-11) from Lachesana tarabaevi (Spider).